The sequence spans 303 residues: Ribosomal protein L11 methyltransferase (303 aa).

S-adenosyl-L-methionine-binding residues include Thr-152, Gly-173, Asp-195, and Asn-239.

The protein belongs to the methyltransferase superfamily. PrmA family.

It is found in the cytoplasm. It catalyses the reaction L-lysyl-[protein] + 3 S-adenosyl-L-methionine = N(6),N(6),N(6)-trimethyl-L-lysyl-[protein] + 3 S-adenosyl-L-homocysteine + 3 H(+). Methylates ribosomal protein L11. The protein is Ribosomal protein L11 methyltransferase of Desulforapulum autotrophicum (strain ATCC 43914 / DSM 3382 / VKM B-1955 / HRM2) (Desulfobacterium autotrophicum).